Consider the following 360-residue polypeptide: Peptide chain release factor 1 (360 aa).

Residue Gln235 is modified to N5-methylglutamine. The disordered stretch occupies residues Lys285–Gln314.

Belongs to the prokaryotic/mitochondrial release factor family. Methylated by PrmC. Methylation increases the termination efficiency of RF1.

The protein localises to the cytoplasm. Peptide chain release factor 1 directs the termination of translation in response to the peptide chain termination codons UAG and UAA. In Klebsiella pneumoniae subsp. pneumoniae (strain ATCC 700721 / MGH 78578), this protein is Peptide chain release factor 1.